The sequence spans 84 residues: NADH-ubiquinone oxidoreductase chain 4L (84 aa).

Helical transmembrane passes span 7–29 and 50–70; these read ILLL…EILL and IFSI…LSIL.

It belongs to the complex I subunit 4L family.

The protein resides in the mitochondrion membrane. The catalysed reaction is a ubiquinone + NADH + 5 H(+)(in) = a ubiquinol + NAD(+) + 4 H(+)(out). Core subunit of the mitochondrial membrane respiratory chain NADH dehydrogenase (Complex I) that is believed to belong to the minimal assembly required for catalysis. Complex I functions in the transfer of electrons from NADH to the respiratory chain. The immediate electron acceptor for the enzyme is believed to be ubiquinone. The protein is NADH-ubiquinone oxidoreductase chain 4L (ND4L) of Candida parapsilosis (Yeast).